We begin with the raw amino-acid sequence, 837 residues long: Tuftelin-interacting protein 11 (837 aa).

Basic and acidic residues-rich tracts occupy residues 1–13 (MSLS…GEGH) and 44–64 (QTKE…EERP). 3 disordered regions span residues 1–21 (MSLS…DDER), 34–73 (EFNP…RARD), and 85–135 (LKKG…FAGG). The interval 1-50 (MSLSHLYRDGEGHLDDDDDERENFEITDWDLQNEFNPNRQRHWQTKEEAT) is required for interaction with DHX15. A phosphoserine mark is found at S2, S59, S95, and S98. Acidic residues predominate over residues 91–100 (EEADSEDSDA). Residues 101–116 (EEKPVKQEDFPKDLGP) show a composition bias toward basic and acidic residues. Position 144 is a phosphoserine (S144). A G-patch domain is found at 149 to 195 (TKGIGQKLLQKMGYVPGRGLGKNAQGIINPIEAKQRKGKGAVGAYGS). Residues 183–236 (QRKGKGAVGAYGSERTTQSLQDFPVADSEEEAEEEFQKELSQWRKDPSGSKKKP) form a disordered region. At S210 the chain carries Phosphoserine. Basic and acidic residues predominate over residues 217–231 (EFQKELSQWRKDPSG). The short motif at 700 to 705 (VKDKFN) is the Nuclear localization signal element. The segment at 710 to 734 (IMNRAVSSNVGAYMQPGARENIAYL) is required for nuclear speckle localization.

Belongs to the TFP11/STIP family. Identified in the spliceosome C complex. Found in the Intron Large (IL) complex, a post-mRNA release spliceosomal complex containing the excised intron, U2, U5 and U6 snRNPs, and splicing factors. Interacts with TUFT1. Interacts with DHX15; indicative for a recruitment of DHX15 to the IL complex. Interacts with GCFC2.

It is found in the cytoplasm. Its subcellular location is the nucleus. Functionally, involved in pre-mRNA splicing, specifically in spliceosome disassembly during late-stage splicing events. Intron turnover seems to proceed through reactions in two lariat-intron associated complexes termed Intron Large (IL) and Intron Small (IS). In cooperation with DHX15 seems to mediate the transition of the U2, U5 and U6 snRNP-containing IL complex to the snRNP-free IS complex leading to efficient debranching and turnover of excised introns. May play a role in the differentiation of ameloblasts and odontoblasts or in the forming of the enamel extracellular matrix. The protein is Tuftelin-interacting protein 11 (Tfip11) of Rattus norvegicus (Rat).